The sequence spans 67 residues: PGPDVKCVCCQDGEECPCKGGECCITGTCCKEGDGLCCGKCSNAACKCADGCKCGSGCSCTLGNCTC.

It belongs to the metallothionein superfamily. Type 4 family.

Its function is as follows. Metallothioneins have a high content of cysteine residues that bind various heavy metals. This Sphaerechinus granularis (Purple sea urchin) protein is Metallothionein-B.